The primary structure comprises 172 residues: Transcriptional repressor NrdR (172 aa).

The segment at 3 to 34 (CPFCGAPDTRVIDSRLAGEGDQVRRRRECLSC) is a zinc-finger region. In terms of domain architecture, ATP-cone spans 49 to 139 (PRVVKRDGSR…VYLSFADVQA (91 aa)).

It belongs to the NrdR family. Zn(2+) serves as cofactor.

In terms of biological role, negatively regulates transcription of bacterial ribonucleotide reductase nrd genes and operons by binding to NrdR-boxes. This is Transcriptional repressor NrdR from Thioalkalivibrio sulfidiphilus (strain HL-EbGR7).